The chain runs to 90 residues: UPF0235 protein CPn_0497/CP_0257/CPj0497/CpB0517 (90 aa).

The protein belongs to the UPF0235 family.

The sequence is that of UPF0235 protein CPn_0497/CP_0257/CPj0497/CpB0517 from Chlamydia pneumoniae (Chlamydophila pneumoniae).